A 324-amino-acid polypeptide reads, in one-letter code: MFLLFLLFVVSQVGLLVFSPKFKDLILFRWYYQHIYYPLFTDYTRYRWKYWLVPGFYACILIFCVHLFYNKLNDTVNPYLYSLEKAFIPITIAFTSLTGVASVFVKPLGLQAGPQFQPDYIIFHPSAVCQTCKTIKVPRSKHCPICERCIPLHDHHCIWINNCVGYGNYEYFYSFLLSNCLLLTYASLRLLTLFRITAFKKDKFFLSLFLLTTAFSLIAIVFTYYQLKLVNDGMTNNEQDKWYLVQEYMRNGNLVKDMDGVLYYRSMSTDAQTAEPIFYSTNLYDHSKYHLINPAKILSHEEIINLYDRGSFLDNLKERIHLLD.

Methionine 1 is a topological domain (lumenal). The helical transmembrane segment at 2 to 22 (FLLFLLFVVSQVGLLVFSPKF) threads the bilayer. Over 23–49 (KDLILFRWYYQHIYYPLFTDYTRYRWK) the chain is Cytoplasmic. A helical transmembrane segment spans residues 50 to 70 (YWLVPGFYACILIFCVHLFYN). At 71–84 (KLNDTVNPYLYSLE) the chain is on the lumenal side. The chain crosses the membrane as a helical span at residues 85 to 105 (KAFIPITIAFTSLTGVASVFV). The Cytoplasmic segment spans residues 106–173 (KPLGLQAGPQ…VGYGNYEYFY (68 aa)). The DHHC domain maps to 127-177 (AVCQTCKTIKVPRSKHCPICERCIPLHDHHCIWINNCVGYGNYEYFYSFLL). The helical transmembrane segment at 174-194 (SFLLSNCLLLTYASLRLLTLF) threads the bilayer. The Lumenal segment spans residues 195–203 (RITAFKKDK). Residues 204–224 (FFLSLFLLTTAFSLIAIVFTY) traverse the membrane as a helical segment. The Cytoplasmic segment spans residues 225-324 (YQLKLVNDGM…NLKERIHLLD (100 aa)).

Belongs to the DHHC palmitoyltransferase family. SWF1 subfamily.

The protein resides in the endoplasmic reticulum membrane. The catalysed reaction is L-cysteinyl-[protein] + hexadecanoyl-CoA = S-hexadecanoyl-L-cysteinyl-[protein] + CoA. Palmitoyltransferase that targets several endosomal SNAREs. Palmitoylates the SNAREs at cysteine residues close to the cytoplasmic end of their transmembrane domain. May have a role in the cellular quality control of transmembrane domain-containing proteins. This is Palmitoyltransferase SWF1 (SWF1) from Kluyveromyces lactis (strain ATCC 8585 / CBS 2359 / DSM 70799 / NBRC 1267 / NRRL Y-1140 / WM37) (Yeast).